Consider the following 225-residue polypeptide: Cbp/p300-interacting transactivator 2 (225 aa).

This sequence belongs to the CITED family.

It is found in the nucleus. Functionally, transcriptional coactivator or corepressor of the p300/CBP-mediated transcription complex. May be involved in sex determination, early gonad development, left-right patterning during embryogenesis and differentiation of the adrenal cortex. The protein is Cbp/p300-interacting transactivator 2 (cited2) of Xenopus laevis (African clawed frog).